The chain runs to 462 residues: Acetyl-CoA decarbonylase/synthase complex subunit gamma (462 aa).

Residues 1–60 (MAQLSAMDVYNLLPKANCGACGCKTCMEFATKLVNREAKPEDCPKLDDESLEKLQELLAP) form the 4Fe-4S domain. [4Fe-4S] cluster is bound by residues cysteine 18, cysteine 21, cysteine 26, and cysteine 43.

In terms of assembly, heterodimer of delta and gamma chains. The ACDS complex is made up of alpha, epsilon, beta, gamma and delta chains with a probable stoichiometry of (alpha(2)epsilon(2))(4)-beta(8)-(gamma(1)delta(1))(8). It depends on corrinoid as a cofactor. [4Fe-4S] cluster is required as a cofactor.

The enzyme catalyses 5,6,7,8-tetrahydrosarcinapterin + methyl-Co(III)-[corrinoid Fe-S protein] = 5-methyltetrahydrosarcinapterin + Co(I)-[corrinoid Fe-S protein] + H(+). In terms of biological role, part of a complex that catalyzes the reversible cleavage of acetyl-CoA, allowing autotrophic growth from CO(2). The polypeptide is Acetyl-CoA decarbonylase/synthase complex subunit gamma (Methanopyrus kandleri (strain AV19 / DSM 6324 / JCM 9639 / NBRC 100938)).